The chain runs to 192 residues: 4'-phosphopantetheinyl transferase AcpT (192 aa).

Belongs to the P-Pant transferase superfamily. Gsp/Sfp/HetI/AcpT family.

It catalyses the reaction apo-[ACP] + CoA = holo-[ACP] + adenosine 3',5'-bisphosphate + H(+). May be involved in an alternative pathway for phosphopantetheinyl transfer and holo-ACP synthesis. The native apo-protein substrate is unknown. The polypeptide is 4'-phosphopantetheinyl transferase AcpT (acpT) (Salmonella typhi).